The sequence spans 583 residues: Ferredoxin--nitrite reductase, chloroplastic (583 aa).

The transit peptide at 1 to 22 directs the protein to the chloroplast; that stretch reads MSSLSVRFLSPPLFSSTPAWPR. Positions 461, 467, 502, and 506 each coordinate [4Fe-4S] cluster. C506 is a siroheme binding site.

This sequence belongs to the nitrite and sulfite reductase 4Fe-4S domain family. In terms of assembly, monomer. Siroheme serves as cofactor. It depends on [4Fe-4S] cluster as a cofactor.

It is found in the plastid. It localises to the chloroplast. It catalyses the reaction 6 oxidized [2Fe-2S]-[ferredoxin] + NH4(+) + 2 H2O = nitrite + 6 reduced [2Fe-2S]-[ferredoxin] + 8 H(+). The protein operates within nitrogen metabolism; nitrate reduction (assimilation). In Betula pendula (European white birch), this protein is Ferredoxin--nitrite reductase, chloroplastic (NIR1).